We begin with the raw amino-acid sequence, 184 residues long: Lipid A acyltransferase PagP (184 aa).

The signal sequence occupies residues 1–22 (MNIRHGIIAMSSTMLVPLAAEA). Catalysis depends on residues histidine 57, aspartate 100, and serine 101.

Belongs to the lipid A palmitoyltransferase family. In terms of assembly, homodimer.

Its subcellular location is the cell outer membrane. The catalysed reaction is a lipid A + a 1,2-diacyl-sn-glycero-3-phosphocholine = a hepta-acyl lipid A + a 2-acyl-sn-glycero-3-phosphocholine. It catalyses the reaction a lipid IVA + a 1,2-diacyl-sn-glycero-3-phosphocholine = a lipid IVB + a 2-acyl-sn-glycero-3-phosphocholine. The enzyme catalyses a lipid IIA + a 1,2-diacyl-sn-glycero-3-phosphocholine = a lipid IIB + a 2-acyl-sn-glycero-3-phosphocholine. In terms of biological role, transfers a fatty acid residue from the sn-1 position of a phospholipid to the N-linked hydroxyfatty acid chain on the proximal unit of lipid A or its precursors. This Methylobacillus flagellatus (strain ATCC 51484 / DSM 6875 / VKM B-1610 / KT) protein is Lipid A acyltransferase PagP.